A 299-amino-acid chain; its full sequence is Mitochondrial 2-oxodicarboxylate carrier (299 aa).

3 Solcar repeats span residues 11–100 (NEAS…YKKL), 107–196 (SPAL…VKNI), and 205–294 (LEFL…TYSW). Helical transmembrane passes span 17–37 (ILAGGSAGLVEICLMHPLDVV), 62–82 (MIFRTEGLFGFYKGILPPILA), 100–120 (LLGYVSLSPALTFAVAGLGSG), 179–199 (HGVFNMVYFGFYFNVKNIIPV), 211–231 (FGIGLLSGTIASVINIPFDVA), and 274–290 (IMRLGPGGAVMLLVYEY).

The protein belongs to the mitochondrial carrier (TC 2.A.29) family.

It localises to the mitochondrion inner membrane. It carries out the reaction 2-oxoadipate(in) + 2-oxoglutarate(out) = 2-oxoadipate(out) + 2-oxoglutarate(in). It catalyses the reaction hexanedioate(in) + 2-oxoglutarate(out) = hexanedioate(out) + 2-oxoglutarate(in). The catalysed reaction is L-2-aminoadipate(in) + 2-oxoglutarate(out) = L-2-aminoadipate(out) + 2-oxoglutarate(in). The enzyme catalyses glutarate(in) + 2-oxoglutarate(out) = glutarate(out) + 2-oxoglutarate(in). It carries out the reaction 2-oxoheptanedioate(in) + 2-oxoglutarate(out) = 2-oxoheptanedioate(out) + 2-oxoglutarate(in). It catalyses the reaction heptanedioate(in) + 2-oxoglutarate(out) = heptanedioate(out) + 2-oxoglutarate(in). The catalysed reaction is citrate(in) + 2-oxoglutarate(out) = citrate(out) + 2-oxoglutarate(in). Its function is as follows. Transports dicarboxylates across the inner membranes of mitochondria by a counter-exchange mechanism. Can transport 2-oxoadipate (2-oxohexanedioate), 2-oxoglutarate, adipate (hexanedioate), glutarate, and to a lesser extent, pimelate (heptanedioate), 2-oxopimelate (2-oxoheptanedioate), 2-aminoadipate (2-aminohexanedioate), oxaloacetate, and citrate. Plays a central role in catabolism of lysine, hydroxylysine, and tryptophan, by transporting common metabolite intermediates (such as 2-oxoadipate) into the mitochondria, where it is converted into acetyl-CoA and can enter the citric acid (TCA) cycle. The polypeptide is Mitochondrial 2-oxodicarboxylate carrier (SLC25A21) (Bos taurus (Bovine)).